The chain runs to 287 residues: Urease accessory protein UreD (287 aa).

Belongs to the UreD family. In terms of assembly, ureD, UreF and UreG form a complex that acts as a GTP-hydrolysis-dependent molecular chaperone, activating the urease apoprotein by helping to assemble the nickel containing metallocenter of UreC. The UreE protein probably delivers the nickel.

Its subcellular location is the cytoplasm. Required for maturation of urease via the functional incorporation of the urease nickel metallocenter. The polypeptide is Urease accessory protein UreD (Aliivibrio fischeri (strain MJ11) (Vibrio fischeri)).